A 901-amino-acid chain; its full sequence is Protein translocase subunit SecA (901 aa).

ATP is bound by residues Gln87, 105-109, and Asp512; that span reads GEGKT. The segment at 852 to 901 is disordered; that stretch reads AQMQQLSHQDDDSAAAAALAAQTGDRKVGRNDPCPCGSGKKYKQCHGRLS. Zn(2+) is bound by residues Cys885, Cys887, Cys896, and His897. Over residues 891-901 the composition is skewed to basic residues; the sequence is KKYKQCHGRLS.

Belongs to the SecA family. In terms of assembly, monomer and homodimer. Part of the essential Sec protein translocation apparatus which comprises SecA, SecYEG and auxiliary proteins SecDF-YajC and YidC. The cofactor is Zn(2+).

It localises to the cell inner membrane. It is found in the cytoplasm. It catalyses the reaction ATP + H2O + cellular proteinSide 1 = ADP + phosphate + cellular proteinSide 2.. In terms of biological role, part of the Sec protein translocase complex. Interacts with the SecYEG preprotein conducting channel. Has a central role in coupling the hydrolysis of ATP to the transfer of proteins into and across the cell membrane, serving both as a receptor for the preprotein-SecB complex and as an ATP-driven molecular motor driving the stepwise translocation of polypeptide chains across the membrane. The sequence is that of Protein translocase subunit SecA from Citrobacter koseri (strain ATCC BAA-895 / CDC 4225-83 / SGSC4696).